A 212-amino-acid polypeptide reads, in one-letter code: Large ribosomal subunit protein bL25 (212 aa).

Residues 181–212 are disordered; sequence LSEPKEEVIEEDVEEVSADVPTVSETEEEDAE. Acidic residues predominate over residues 188–197; it reads VIEEDVEEVS.

The protein belongs to the bacterial ribosomal protein bL25 family. CTC subfamily. In terms of assembly, part of the 50S ribosomal subunit; part of the 5S rRNA/L5/L18/L25 subcomplex. Contacts the 5S rRNA. Binds to the 5S rRNA independently of L5 and L18.

In terms of biological role, this is one of the proteins that binds to the 5S RNA in the ribosome where it forms part of the central protuberance. The polypeptide is Large ribosomal subunit protein bL25 (Finegoldia magna (strain ATCC 29328 / DSM 20472 / WAL 2508) (Peptostreptococcus magnus)).